The chain runs to 505 residues: Monocarboxylate transporter 6 (505 aa).

Residues 1 to 17 (MPQALERADGSWAWVVL) lie on the Cytoplasmic side of the membrane. A helical membrane pass occupies residues 18-38 (LATMVTQGLTLGFPTCIGIFF). Topologically, residues 39–53 (TELQWEFQASNSETS) are extracellular. A helical transmembrane segment spans residues 54 to 74 (WFPSILTAVLHMAGPLCSILV). At 75–80 (GRFGCR) the chain is on the cytoplasmic side. A helical transmembrane segment spans residues 81 to 101 (VTVMLGGVLASLGMVASSFSH). Over 102–110 (NLSQLYFTA) the chain is Extracellular. The chain crosses the membrane as a helical span at residues 111 to 131 (GFITGLGMCFSFQSSITVLGF). Residues 132-137 (YFVRRR) are Cytoplasmic-facing. The chain crosses the membrane as a helical span at residues 138-158 (VLANALASMGVSLGITLWPLL). Residues 159-171 (SRYLLENLGWRGT) lie on the Extracellular side of the membrane. A helical transmembrane segment spans residues 172 to 192 (FLVFGGIFLHCCICGAIIRPV). Topologically, residues 193 to 239 (ATSVAPETKECPPPPPETPALGCLAACGRTIQRHLAFDILRHNTGYC) are cytoplasmic. A helical transmembrane segment spans residues 240-260 (VYILGVMWSVLGFPLPQVFLV). The Extracellular portion of the chain corresponds to 261 to 274 (PYAMWHSVDEQQAA). A helical transmembrane segment spans residues 275-295 (LLISIIGFSNIFLRPLAGLMA). Residues 296 to 305 (GRPAFASHRK) are Cytoplasmic-facing. Residues 306–326 (YLFSLALLLNGLTNLVCAASG) traverse the membrane as a helical segment. At 327–329 (DFW) the chain is on the extracellular side. Residues 330–350 (VLVGYCLAYSVSMSGIGALIF) traverse the membrane as a helical segment. Residues 351–367 (QVLMDIVPMDQFPRALG) are Cytoplasmic-facing. Residues 368 to 388 (LFTVLDGLAFLISPPLAGLLL) traverse the membrane as a helical segment. Topologically, residues 389–396 (DATNNFSY) are extracellular. A helical transmembrane segment spans residues 397–417 (VFYMSSFFLISAALFMGGSFY). Residues 418–505 (ALQKKEQGKQ…QTALGWNSPT (88 aa)) lie on the Cytoplasmic side of the membrane. Residues 443 to 464 (KDGPGKQRSPEIMCQSSRQPRP) are disordered.

It belongs to the major facilitator superfamily. Monocarboxylate porter (TC 2.A.1.13) family. In terms of tissue distribution, highly expressed in kidney.

The protein resides in the cell membrane. Its function is as follows. Proton-linked monocarboxylate transporter. Catalyzes the rapid transport across the plasma membrane of many monocarboxylates such as lactate, pyruvate, branched-chain oxo acids derived from leucine, valine and isoleucine, and the ketone bodies acetoacetate, beta-hydroxybutyrate and acetate. The polypeptide is Monocarboxylate transporter 6 (SLC16A5) (Homo sapiens (Human)).